Here is a 99-residue protein sequence, read N- to C-terminus: Orphan antixoxin protein TacA (99 aa).

The protein belongs to the TacA antitoxin family.

In terms of biological role, putative antitoxin component of a toxin-antitoxin (TA) system; its cognate toxin (usually a tRNA acetylase) is unknown. In Haemophilus influenzae (strain ATCC 51907 / DSM 11121 / KW20 / Rd), this protein is Orphan antixoxin protein TacA.